A 938-amino-acid polypeptide reads, in one-letter code: Isoleucine--tRNA ligase (938 aa).

The 'HIGH' region signature appears at P58–H68. L-isoleucyl-5'-AMP is bound at residue E566. The 'KMSKS' region signature appears at K607–S611. K610 lines the ATP pocket. Zn(2+) is bound by residues C906, C909, C926, and C929.

The protein belongs to the class-I aminoacyl-tRNA synthetase family. IleS type 1 subfamily. Monomer. Zn(2+) serves as cofactor.

It localises to the cytoplasm. The catalysed reaction is tRNA(Ile) + L-isoleucine + ATP = L-isoleucyl-tRNA(Ile) + AMP + diphosphate. Its function is as follows. Catalyzes the attachment of isoleucine to tRNA(Ile). As IleRS can inadvertently accommodate and process structurally similar amino acids such as valine, to avoid such errors it has two additional distinct tRNA(Ile)-dependent editing activities. One activity is designated as 'pretransfer' editing and involves the hydrolysis of activated Val-AMP. The other activity is designated 'posttransfer' editing and involves deacylation of mischarged Val-tRNA(Ile). In Desulfovibrio desulfuricans (strain ATCC 27774 / DSM 6949 / MB), this protein is Isoleucine--tRNA ligase.